The primary structure comprises 88 residues: UPF0250 protein bbp_432 (88 aa).

Belongs to the UPF0250 family.

The protein is UPF0250 protein bbp_432 of Buchnera aphidicola subsp. Baizongia pistaciae (strain Bp).